Here is a 356-residue protein sequence, read N- to C-terminus: 3-dehydroquinate synthase (356 aa).

Residues Gly-106–Asp-110, Thr-130–Thr-131, Lys-143, and Lys-152 contribute to the NAD(+) site. Zn(2+)-binding residues include Glu-185, His-248, and His-265.

It belongs to the sugar phosphate cyclases superfamily. Dehydroquinate synthase family. Requires Co(2+) as cofactor. Zn(2+) is required as a cofactor. NAD(+) serves as cofactor.

The protein localises to the cytoplasm. It catalyses the reaction 7-phospho-2-dehydro-3-deoxy-D-arabino-heptonate = 3-dehydroquinate + phosphate. The protein operates within metabolic intermediate biosynthesis; chorismate biosynthesis; chorismate from D-erythrose 4-phosphate and phosphoenolpyruvate: step 2/7. Its function is as follows. Catalyzes the conversion of 3-deoxy-D-arabino-heptulosonate 7-phosphate (DAHP) to dehydroquinate (DHQ). The sequence is that of 3-dehydroquinate synthase from Thermoanaerobacter sp. (strain X514).